The chain runs to 211 residues: Succinate dehydrogenase subunit 4, mitochondrial (211 aa).

Residues 1-36 (MASRLLARSKALALALSRADAAAPGPAAGVQWLRTL) constitute a mitochondrion transit peptide. The disordered stretch occupies residues 41-64 (RDPAAAASPAPAPRQPAVGSPLGL). Residue His-166 coordinates heme. Residue Tyr-179 coordinates a ubiquinone. Residues 188–210 (WVFIYFKILLIIMAKETVVYFDL) traverse the membrane as a helical segment.

Component of complex II composed of eight subunits in plants: four classical SDH subunits SDH1, SDH2, SDH3 and SDH4 (a flavoprotein (FP), an iron-sulfur protein (IP), and a cytochrome b composed of a large and a small subunit.), as well as four subunits unknown in mitochondria from bacteria and heterotrophic eukaryotes. The cofactor is heme.

Its subcellular location is the mitochondrion inner membrane. Its pathway is carbohydrate metabolism; tricarboxylic acid cycle. Its function is as follows. Membrane-anchoring subunit of succinate dehydrogenase (SDH). The protein is Succinate dehydrogenase subunit 4, mitochondrial of Oryza sativa subsp. japonica (Rice).